We begin with the raw amino-acid sequence, 113 residues long: MSVKIRKGDLVQVITGSKTGGKKGKQGRVLAVSGDRVWVEGVNLTTRHRKRVTNDKGTSSGGLEKRESPMHISNVALVDPETGAPTKVGFLVKTSGDKTVRVRFAKKSGKELT.

The segment at 48–70 (HRKRVTNDKGTSSGGLEKRESPM) is disordered.

The protein belongs to the universal ribosomal protein uL24 family. Part of the 50S ribosomal subunit.

Its function is as follows. One of two assembly initiator proteins, it binds directly to the 5'-end of the 23S rRNA, where it nucleates assembly of the 50S subunit. In terms of biological role, one of the proteins that surrounds the polypeptide exit tunnel on the outside of the subunit. This chain is Large ribosomal subunit protein uL24, found in Tropheryma whipplei (strain TW08/27) (Whipple's bacillus).